Consider the following 500-residue polypeptide: Cytochrome P450 71D13 (500 aa).

A helical; Signal-anchor for type II membrane protein transmembrane segment spans residues 3-23 (LQISSAIIILVVTYTISLLII). Cys-439 contributes to the heme binding site.

Belongs to the cytochrome P450 family. It depends on heme as a cofactor.

Its subcellular location is the endoplasmic reticulum membrane. The enzyme catalyses (4S)-limonene + reduced [NADPH--hemoprotein reductase] + O2 = (1S,6R)-isopiperitenol + oxidized [NADPH--hemoprotein reductase] + H2O + H(+). Functionally, hydroxylates (-)-(4S)-limonene to (-)-trans-isopiperitenol, a precursor of (-)-menthol, responsible for the cooling sensation of peppermint. In Mentha piperita (Peppermint), this protein is Cytochrome P450 71D13 (CYP71D13).